A 567-amino-acid chain; its full sequence is Urease subunit alpha (567 aa).

Residues 129-567 (GGIDSHIHFI…LPLAQRYFLF (439 aa)) enclose the Urease domain. The Ni(2+) site is built by His-134, His-136, and Lys-217. Lys-217 carries the post-translational modification N6-carboxylysine. Substrate is bound at residue His-219. Ni(2+)-binding residues include His-246 and His-272. His-320 functions as the Proton donor in the catalytic mechanism. Asp-360 serves as a coordination point for Ni(2+).

The protein belongs to the metallo-dependent hydrolases superfamily. Urease alpha subunit family. In terms of assembly, heterotrimer of UreA (gamma), UreB (beta) and UreC (alpha) subunits. Three heterotrimers associate to form the active enzyme. It depends on Ni cation as a cofactor. Post-translationally, carboxylation allows a single lysine to coordinate two nickel ions.

The protein localises to the cytoplasm. It carries out the reaction urea + 2 H2O + H(+) = hydrogencarbonate + 2 NH4(+). It participates in nitrogen metabolism; urea degradation; CO(2) and NH(3) from urea (urease route): step 1/1. The sequence is that of Urease subunit alpha from Pseudomonas entomophila (strain L48).